Here is a 959-residue protein sequence, read N- to C-terminus: MMKKGKGKNSGLLPNSFKIISSCLKTVSANATNVASSVRSAGASVAASISAAEDDKDQVTWAGFGILELGQHVTRHVLLLGYQNGFQVFDVEDASNFNELVSKRGGPVSFLQMQPLPARSGDHEGFWNSHPLLLVVAGDETNGTGLGHSFSQNGSLARDGSSDSKAGDAINYPTTVRFYSLRSHSYVYVLRFRSSVCMIRCSSRVVAVGLANQIYCVDALTLENKFSVLTYPVPQPVRQGTTRVNVGYGPMAVGPRWLAYASKSSMTMKTGRLSPQTFTSSPSLSPSSSSGGSSFMARYAMESSKQLANGLINLGDMGYKTLSKYCQDMLPDGSTSPASPNAIWKVGGVSGSDAENAGMVAVKDLVSGALVSQFKAHTSPISALCFDPSGTLLVTASVCGNNINVFQIMPSRSHNAPGDLSYEWESSHVHLFKLHRGITSAIVQDICFSQQSQWVAIISSKGTCHIFVLNSSGSDAAFQPCEGEEPTRLPASSLPWWFTQSLSSNQQSLSPPTAVALSVVSRIKYSSFGWLNTVSNATTAATGKVFVPSGAVAAVFHKSVTHDLQLNSRTNALEHILVYTPSGHVVQHELLPSVCTESPENGLRVQKTSHVQVQEDDLRVKVEPIQWWDVCRRSDWLETEERLPKSITEKQYDLETVSNHLTSHEDACLSLDMNSHFSEDKYLKSCSEKPPERSHCYLSNFEVKVTSGMLPVWQNSKISFHVMDSPRDSSSTGGEFEIEKVPAHELEIKQKKLLPVFDHFHSTKATLEDRFSMKCYHTSATGSHQVNGKICQDIINCHSKPGSIESAESSEEGSTKQMENLHDSDHMSNSIKSSLPLYPTVNGIYKEIEKNNANGWMEKPVTAKLSTLKETRITNGFTTPPILTDSVNEQMLSTGKPPMGFGFALHEEHCKAVADPKEEHLKKKLDEVTNVHHLNVNNNNTEKLQGDKMVHGMVSFVGD.

WD repeat units lie at residues 376–416 (AHTS…SHNA) and 438–479 (ITSA…AAFQ). Residues 802–832 (GSIESAESSEEGSTKQMENLHDSDHMSNSIK) form a disordered region.

This sequence belongs to the WD repeat PROPPIN family. In terms of assembly, component of the PI(3,5)P2 regulatory complex at least composed of ATG18, SAC/FIG4, FAB1 and VAC14. As to expression, expressed in leaves.

Its subcellular location is the preautophagosomal structure membrane. The protein resides in the vacuole membrane. Its function is as follows. The PI(3,5)P2 regulatory complex regulates both the synthesis and turnover of phosphatidylinositol 3,5-bisphosphate (PtdIns(3,5)P2). Required for autophagy. In Arabidopsis thaliana (Mouse-ear cress), this protein is Autophagy-related protein 18g (ATG18G).